The chain runs to 754 residues: Polyadenylate-binding protein, cytoplasmic and nuclear (754 aa).

Over residues 1–25 (MSAEVSTTPAADNVNGTPEATNAAA) the composition is skewed to polar residues. Residues 1 to 52 (MSAEVSTTPAADNVNGTPEATNAAATSAPEVTAVESSSPTSPNNNNQPHSAS) form a disordered region. Residues 36-46 (SSSPTSPNNNN) show a composition bias toward low complexity. RRM domains lie at 51–129 (ASLY…WSQR), 139–216 (GNVF…HHIS), 232–309 (TNIY…RAQK), and 335–465 (VNLY…LAQR). 2 disordered regions span residues 365–420 (KVMR…KKSD) and 595–648 (RGGG…EEAP). Over residues 366–420 (VMRDSTPAERTETPDSEKEKEVNKENEKKEDEEKAAEEKPKESDEEKKDETKKSD) the composition is skewed to basic and acidic residues. Gly residues predominate over residues 610 to 633 (GMRGPGYQGRGGPQGGPRPQGGRG). Residues 634–648 (QNAAAQPAAGREEAP) show a composition bias toward low complexity. The 78-residue stretch at 649–726 (AGALTAQALN…ALSVYDEYMK (78 aa)) folds into the PABC domain. Residues 729–754 (GEGEAPADADKPKEAAKETATEENKS) form a disordered region.

The protein belongs to the polyadenylate-binding protein type-1 family.

The protein resides in the cytoplasm. It is found in the nucleus. Functionally, binds the poly(A) tail of mRNA. Appears to be an important mediator of the multiple roles of the poly(A) tail in mRNA biogenesis, stability and translation. In the nucleus, involved in both mRNA cleavage and polyadenylation. Is also required for efficient mRNA export to the cytoplasm. Acts in concert with a poly(A)-specific nuclease (PAN) to affect poly(A) tail shortening, which may occur concomitantly with either nucleocytoplasmic mRNA transport or translational initiation. In the cytoplasm, stimulates translation initiation and regulates mRNA decay through translation termination-coupled poly(A) shortening, probably mediated by PAN. In Aspergillus clavatus (strain ATCC 1007 / CBS 513.65 / DSM 816 / NCTC 3887 / NRRL 1 / QM 1276 / 107), this protein is Polyadenylate-binding protein, cytoplasmic and nuclear (pab1).